The primary structure comprises 601 residues: Glutathione-regulated potassium-efflux system protein KefB (601 aa).

The next 13 helical transmembrane spans lie at 4–24 (SDFL…VPLA), 29–49 (IGAV…GLGF), 55–75 (EILH…GLEL), 87–107 (IFGV…GLLM), 115–135 (AAVV…LQLM), 152–172 (VLLF…LLAG), 177–197 (HFDW…LIGG), 207–227 (FIAA…LVLG), 230–250 (LFMD…GVLL), 262–282 (AIDP…GMSL), 284–304 (LGVL…LVAV), 324–344 (MQFA…FSTA), and 356–376 (ALLL…MKLV). In terms of domain architecture, RCK N-terminal spans 400–519 (KPQVIVVGFG…AGVTQFSRET (120 aa)).

The protein belongs to the monovalent cation:proton antiporter 2 (CPA2) transporter (TC 2.A.37) family. KefB subfamily. Interacts with the regulatory subunit KefG.

The protein localises to the cell inner membrane. Pore-forming subunit of a potassium efflux system that confers protection against electrophiles. Catalyzes K(+)/H(+) antiport. The protein is Glutathione-regulated potassium-efflux system protein KefB of Shigella boydii serotype 18 (strain CDC 3083-94 / BS512).